Reading from the N-terminus, the 347-residue chain is Tetracycline resistance determinant (347 aa).

8 helical membrane-spanning segments follow: residues 3-20, 30-52, 73-95, 108-130, 137-156, 161-183, 204-226, and 294-316; these read VLGAAALALFLVPLLIVA, SPAALALFALGAAGLAVFIPVEL, CSAVNFTIGVGIFGTVTTLPLFL, LVVIPFMLGTIASQMVSGKLIAS, LAIVGLGSMAGALLAMATTG, MWGIVLIVLWLGVGIGLSQTVIT, CAGQIGGSTGIAVLFSVMFAVAL, and GFHIMFLPGGVVLLAGFVMTWFL. Residues 321 to 347 form a disordered region; it reads EETAPEEERPAESGAGAKNGPLPASDA.

Belongs to the major facilitator superfamily. TCR/Tet family.

The protein resides in the cell membrane. Functionally, resistance to tetracycline by an active tetracycline efflux. This is an energy-dependent process that decreases the accumulation of the antibiotic in whole cells. This protein functions as a metal-tetracycline/H(+) antiporter. This chain is Tetracycline resistance determinant (tetB), found in Streptomyces rimosus.